Here is a 1049-residue protein sequence, read N- to C-terminus: Probable ATP-dependent permease (1049 aa).

The signal sequence occupies residues methionine 1–alanine 25. Over lysine 26–lysine 324 the chain is Lumenal. N-linked (GlcNAc...) asparagine glycosylation is found at asparagine 50, asparagine 114, asparagine 165, and asparagine 221. A helical membrane pass occupies residues leucine 325–isoleucine 345. At serine 346–lysine 463 the chain is on the cytoplasmic side. The ABC transporter domain occupies leucine 384–aspartate 631. Glycine 423–threonine 430 contributes to the ATP binding site. Residues isoleucine 464–phenylalanine 481 form a helical membrane-spanning segment. Residues glutamate 482 to lysine 793 lie on the Lumenal side of the membrane. A phosphoserine mark is found at serine 659 and serine 702. One can recognise an ABC transmembrane type-2 domain in the interval lysine 793–isoleucine 1044. The chain crosses the membrane as a helical span at residues leucine 794–tyrosine 814. The Cytoplasmic portion of the chain corresponds to asparagine 815–glycine 828. A helical membrane pass occupies residues leucine 829–alanine 849. The Lumenal portion of the chain corresponds to leucine 850–glutamate 877. Residues valine 878–glycine 898 traverse the membrane as a helical segment. The Cytoplasmic portion of the chain corresponds to leucine 899–cysteine 909. A helical transmembrane segment spans residues isoleucine 910 to isoleucine 930. Residues phenylalanine 931 to serine 937 are Lumenal-facing. N-linked (GlcNAc...) asparagine glycosylation occurs at asparagine 935. A helical transmembrane segment spans residues isoleucine 938–threonine 958. Topologically, residues lysine 959–asparagine 1000 are cytoplasmic. The helical transmembrane segment at isoleucine 1001 to phenylalanine 1021 threads the bilayer. Over aspartate 1022 to lysine 1024 the chain is Lumenal. A helical transmembrane segment spans residues isoleucine 1025–valine 1045. Topologically, residues valine 1046 to lysine 1049 are cytoplasmic.

This sequence belongs to the ABC transporter superfamily. ABCG family. Eye pigment precursor importer (TC 3.A.1.204) subfamily.

Its subcellular location is the endoplasmic reticulum membrane. In Saccharomyces cerevisiae (strain ATCC 204508 / S288c) (Baker's yeast), this protein is Probable ATP-dependent permease (ADP1).